The chain runs to 144 residues: Transcriptional regulator SlyA (144 aa).

One can recognise an HTH marR-type domain in the interval 2–135 (ESPLGSDLAR…LIKLVAKLEH (134 aa)). Residues 49-72 (QIQLAKAIGIEQPSLVRTLDQLED) constitute a DNA-binding region (H-T-H motif).

It belongs to the SlyA family. In terms of assembly, homodimer.

Its function is as follows. Transcription regulator that can specifically activate or repress expression of target genes. Required to activate expression of virulent genes. The sequence is that of Transcriptional regulator SlyA from Salmonella choleraesuis (strain SC-B67).